Here is a 555-residue protein sequence, read N- to C-terminus: Formate--tetrahydrofolate ligase (555 aa).

It belongs to the formate--tetrahydrofolate ligase family.

The catalysed reaction is (6S)-5,6,7,8-tetrahydrofolate + formate + ATP = (6R)-10-formyltetrahydrofolate + ADP + phosphate. Its pathway is one-carbon metabolism; tetrahydrofolate interconversion. This is Formate--tetrahydrofolate ligase from Porphyromonas gingivalis (strain ATCC BAA-308 / W83).